Here is a 494-residue protein sequence, read N- to C-terminus: Guanosine-5'-triphosphate,3'-diphosphate pyrophosphatase (494 aa).

Belongs to the GppA/Ppx family. GppA subfamily.

The enzyme catalyses guanosine 3'-diphosphate 5'-triphosphate + H2O = guanosine 3',5'-bis(diphosphate) + phosphate + H(+). The protein operates within purine metabolism; ppGpp biosynthesis; ppGpp from GTP: step 2/2. Functionally, catalyzes the conversion of pppGpp to ppGpp. Guanosine pentaphosphate (pppGpp) is a cytoplasmic signaling molecule which together with ppGpp controls the 'stringent response', an adaptive process that allows bacteria to respond to amino acid starvation, resulting in the coordinated regulation of numerous cellular activities. In Erwinia tasmaniensis (strain DSM 17950 / CFBP 7177 / CIP 109463 / NCPPB 4357 / Et1/99), this protein is Guanosine-5'-triphosphate,3'-diphosphate pyrophosphatase.